The following is a 325-amino-acid chain: Large ribosomal subunit protein uL4m (325 aa).

The tract at residues alanine 113–proline 158 is disordered.

This sequence belongs to the universal ribosomal protein uL4 family. As to quaternary structure, component of the mitochondrial large ribosomal subunit (mt-LSU). Mature N.crassa 74S mitochondrial ribosomes consist of a small (37S) and a large (54S) subunit. The 37S small subunit contains a 16S ribosomal RNA (16S mt-rRNA) and 32 different proteins. The 54S large subunit contains a 23S rRNA (23S mt-rRNA) and 42 different proteins.

The protein localises to the mitochondrion. Its function is as follows. Component of the mitochondrial ribosome (mitoribosome), a dedicated translation machinery responsible for the synthesis of mitochondrial genome-encoded proteins, including at least some of the essential transmembrane subunits of the mitochondrial respiratory chain. The mitoribosomes are attached to the mitochondrial inner membrane and translation products are cotranslationally integrated into the membrane. This chain is Large ribosomal subunit protein uL4m (yml6), found in Neurospora crassa (strain ATCC 24698 / 74-OR23-1A / CBS 708.71 / DSM 1257 / FGSC 987).